The primary structure comprises 474 residues: PTS system N-acetylmuramic acid-specific EIIBC component (474 aa).

In terms of domain architecture, PTS EIIB type-1 spans 1–89 (MAKEISSELL…SELLGDAPVQ (89 aa)). Over 1–123 (MAKEISSELL…LAKFATIFTP (123 aa)) the chain is Cytoplasmic. The active-site Phosphocysteine intermediate; for EIIB activity is the C29. The region spanning 115-474 (AKFATIFTPL…LFGCRNVNLD (360 aa)) is the PTS EIIC type-1 domain. The chain crosses the membrane as a helical span at residues 124–144 (LIPGFIAAGLLLGIATLIATV). The Periplasmic segment spans residues 145 to 157 (MHVPADAQGTLPD). Residues 158–178 (ALNFMKVFSKGLFTFLVILVG) form a helical membrane-spanning segment. The Cytoplasmic portion of the chain corresponds to 179–180 (YN). Residues 181-201 (AAQAFGGTGVNGAIIAALFLL) form a helical membrane-spanning segment. At 202–217 (GYNPAATTGYYAGFHD) the chain is on the periplasmic side. A helical transmembrane segment spans residues 218–238 (FFGLPIDPRGNIIGVLIAAWA). Topologically, residues 239–260 (CARIEGMVRRFMPDDLDMLLTS) are cytoplasmic. A helical transmembrane segment spans residues 261–281 (LITLLITATLAYLIIMPLGGW). Topologically, residues 282–301 (LFEGMSWLFMHLNSNPFGCA) are periplasmic. Residues 302–322 (VLAGLFLIAVVFGVHQGFIPV) form a helical membrane-spanning segment. Topologically, residues 323 to 334 (YLALMDSQGFNS) are cytoplasmic. Residues 335 to 355 (LFPILSMAGAGQVGAALALYW) form a helical membrane-spanning segment. Residues 356 to 368 (RAQPHSALRSQVR) are Periplasmic-facing. The chain crosses the membrane as a helical span at residues 369-389 (GAIIPGLLGVGEPLIYGVTLP). Over 390–393 (RMKP) the chain is Cytoplasmic. Residues 394-414 (FVTACLGGAAGGLFIGLIAWW) traverse the membrane as a helical segment. The Periplasmic segment spans residues 415 to 440 (GLPMGLNSAFGPSGLVALPLMTSAQG). The chain crosses the membrane as a helical span at residues 441–461 (ILPAMAVYAGGILVAWVCGFI). Residues 462–474 (FTTLFGCRNVNLD) are Cytoplasmic-facing.

Its subcellular location is the cell inner membrane. The catalysed reaction is N-acetyl-beta-D-muramate(out) + N(pros)-phospho-L-histidyl-[protein] = N-acetyl-beta-D-muramate 6-phosphate(in) + L-histidyl-[protein]. Its function is as follows. The phosphoenolpyruvate-dependent sugar phosphotransferase system (sugar PTS), a major carbohydrate active transport system, catalyzes the phosphorylation of incoming sugar substrates concomitantly with their translocation across the cell membrane. This system is involved in N-acetylmuramic acid (MurNAc) transport, yielding cytoplasmic MurNAc-6-P. Is also able to take up anhydro-N-acetylmuramic acid (anhMurNAc), but cannot phosphorylate the carbon 6, probably because of the 1,6-anhydro ring. The chain is PTS system N-acetylmuramic acid-specific EIIBC component (murP) from Shigella flexneri.